Reading from the N-terminus, the 135-residue chain is Putative pre-16S rRNA nuclease (135 aa).

The protein belongs to the YqgF nuclease family.

It is found in the cytoplasm. Could be a nuclease involved in processing of the 5'-end of pre-16S rRNA. The polypeptide is Putative pre-16S rRNA nuclease (Buchnera aphidicola subsp. Acyrthosiphon pisum (strain 5A)).